The sequence spans 90 residues: MKKAVLIAAMFCGVVSLSSCCRIVDCCFEDPCAPSSCNPCEVIRKKERSCGGNACGSYVPSCSNPCGSTECNSQSPQVKGCTSPDGRCKQ.

The signal sequence occupies residues 1–19; that stretch reads MKKAVLIAAMFCGVVSLSS. Cys20 carries N-palmitoyl cysteine lipidation. Residue Cys20 is the site of S-diacylglycerol cysteine attachment. The disordered stretch occupies residues 69–90; the sequence is TECNSQSPQVKGCTSPDGRCKQ.

As to quaternary structure, part of a disulfide cross-linked outer membrane complex (COMC) composed of the major outer membrane porin (MOMP), the small cysteine-rich protein (OmcA) and the large cysteine-rich periplasmic protein (OmcB).

Its subcellular location is the cell outer membrane. Functionally, in elementary bodies (EBs, the infectious stage, which is able to survive outside the host cell) provides the structural integrity of the outer envelope through disulfide cross-links with the large cysteine-rich periplasmic protein and the major outer membrane porin. It has been described in publications as the Sarkosyl-insoluble COMC (Chlamydia outer membrane complex), and serves as the functional equivalent of peptidoglycan. This Chlamydia pneumoniae (Chlamydophila pneumoniae) protein is Small cysteine-rich outer membrane protein OmcA (omcA).